The primary structure comprises 240 residues: Probable 2-phosphosulfolactate phosphatase (240 aa).

The protein belongs to the ComB family. Mg(2+) is required as a cofactor.

It catalyses the reaction (2R)-O-phospho-3-sulfolactate + H2O = (2R)-3-sulfolactate + phosphate. This Clostridium kluyveri (strain NBRC 12016) protein is Probable 2-phosphosulfolactate phosphatase.